The sequence spans 248 residues: tRNA (guanine-N(1)-)-methyltransferase (248 aa).

S-adenosyl-L-methionine is bound by residues G113 and 133 to 138; that span reads IGDYVL.

Belongs to the RNA methyltransferase TrmD family. Homodimer.

It is found in the cytoplasm. The enzyme catalyses guanosine(37) in tRNA + S-adenosyl-L-methionine = N(1)-methylguanosine(37) in tRNA + S-adenosyl-L-homocysteine + H(+). In terms of biological role, specifically methylates guanosine-37 in various tRNAs. This Shewanella denitrificans (strain OS217 / ATCC BAA-1090 / DSM 15013) protein is tRNA (guanine-N(1)-)-methyltransferase.